The chain runs to 1132 residues: Rho GTPase-activating protein gacE (1132 aa).

The Rho-GAP domain maps to 76–262; the sequence is LEMNKILKSE…FLISNYLNVF (187 aa). Disordered regions lie at residues 279 to 354 and 472 to 517; these read NELL…SSPI and NSTT…SLIN. Positions 281–301 are enriched in low complexity; it reads LLNNNNNNNNVIMPTTTTTTT. Positions 302–311 are enriched in polar residues; that stretch reads SASSSILPTD. 3 stretches are compositionally biased toward low complexity: residues 328-354, 473-498, and 507-517; these read SIPL…SSPI, STTT…STTT, and SNSASNNSLIN.

It is found in the cytoplasm. Its function is as follows. Rho GTPase-activating protein involved in the signal transduction pathway. This Dictyostelium discoideum (Social amoeba) protein is Rho GTPase-activating protein gacE (gacE).